Consider the following 462-residue polypeptide: UDP-N-acetylmuramate--L-alanine ligase (462 aa).

112–118 (GTHGKTT) contacts ATP.

Belongs to the MurCDEF family.

The protein resides in the cytoplasm. The catalysed reaction is UDP-N-acetyl-alpha-D-muramate + L-alanine + ATP = UDP-N-acetyl-alpha-D-muramoyl-L-alanine + ADP + phosphate + H(+). The protein operates within cell wall biogenesis; peptidoglycan biosynthesis. Cell wall formation. This is UDP-N-acetylmuramate--L-alanine ligase from Geobacter sulfurreducens (strain ATCC 51573 / DSM 12127 / PCA).